A 190-amino-acid polypeptide reads, in one-letter code: Protein LZIC (190 aa).

Positions 2 to 63 (ASRGKTETSK…SEFNDSLKKI (62 aa)) form a coiled coil.

The protein belongs to the CTNNBIP1 family. Does not interact with CTNNB1.

In Rattus norvegicus (Rat), this protein is Protein LZIC (Lzic).